The following is a 163-amino-acid chain: MSVQNGFTAKIIRFVPHFVALRLSWTHNDLKAEGLEQFVEECLPAIRENNPQVKYFLQRSYTTCDPFVVGEYSWLRHRKKRVNWKSKEQVLSMIEEMSIGGDYREGYKRGVNRRLPRGQELWDTETMGHDVFHVTSKWKADIPEEDELPITAKTHPNFTYRKY.

This is an uncharacterized protein from Caenorhabditis elegans.